We begin with the raw amino-acid sequence, 116 residues long: Protein Rev (116 aa).

A phosphoserine; by host CK2 mark is found at S5 and S8. The homomultimerization stretch occupies residues I18–N26. The interval Q24–Q49 is disordered. Residues T34–R50 carry the Nuclear localization signal and RNA-binding (RRE) motif. Residues Q36 to E47 are compositionally biased toward basic residues. The Nuclear export signal and binding to XPO1 signature appears at L73–D84. Phosphoserine; by host occurs at positions 92 and 99.

This sequence belongs to the HIV-1 REV protein family. As to quaternary structure, homomultimer; when bound to the RRE. Multimeric assembly is essential for activity and may involve XPO1. Binds to human KPNB1, XPO1, TNPO1, RANBP5 and IPO7. Interacts with the viral Integrase. Interacts with human KHDRBS1. Interacts with human NAP1; this interaction decreases Rev multimerization and stimulates its activity. Interacts with human DEAD-box helicases DDX3 and DDX24; these interactions may serve for viral RNA export to the cytoplasm and packaging, respectively. Interacts with human PSIP1; this interaction may inhibit HIV-1 DNA integration by promoting dissociation of the Integrase-LEDGF/p75 complex. Asymmetrically arginine dimethylated at one site by host PRMT6. Methylation impairs the RNA-binding activity and export of viral RNA from the nucleus to the cytoplasm. Post-translationally, phosphorylated by protein kinase CK2. Presence of, and maybe binding to the N-terminus of the regulatory beta subunit of CK2 is necessary for CK2-mediated Rev's phosphorylation.

It is found in the host nucleus. It localises to the host nucleolus. The protein resides in the host cytoplasm. Escorts unspliced or incompletely spliced viral pre-mRNAs (late transcripts) out of the nucleus of infected cells. These pre-mRNAs carry a recognition sequence called Rev responsive element (RRE) located in the env gene, that is not present in fully spliced viral mRNAs (early transcripts). This function is essential since most viral proteins are translated from unspliced or partially spliced pre-mRNAs which cannot exit the nucleus by the pathway used by fully processed cellular mRNAs. Rev itself is translated from a fully spliced mRNA that readily exits the nucleus. Rev's nuclear localization signal (NLS) binds directly to KPNB1/Importin beta-1 without previous binding to KPNA1/Importin alpha-1. KPNB1 binds to the GDP bound form of RAN (Ran-GDP) and targets Rev to the nucleus. In the nucleus, the conversion from Ran-GDP to Ran-GTP dissociates Rev from KPNB1 and allows Rev's binding to the RRE in viral pre-mRNAs. Rev multimerization on the RRE via cooperative assembly exposes its nuclear export signal (NES) to the surface. Rev can then form a complex with XPO1/CRM1 and Ran-GTP, leading to nuclear export of the complex. Conversion from Ran-GTP to Ran-GDP mediates dissociation of the Rev/RRE/XPO1/RAN complex, so that Rev can return to the nucleus for a subsequent round of export. Beside KPNB1, also seems to interact with TNPO1/Transportin-1, RANBP5/IPO5 and IPO7/RANBP7 for nuclear import. The nucleoporin-like HRB/RIP is an essential cofactor that probably indirectly interacts with Rev to release HIV RNAs from the perinuclear region to the cytoplasm. This Human immunodeficiency virus type 1 group M subtype B (isolate SF33) (HIV-1) protein is Protein Rev.